We begin with the raw amino-acid sequence, 314 residues long: Olfactory receptor 5G29 (314 aa).

At 1–25 (MEEKNQTIVMEFFFLGLTDHLYQKI) the chain is on the extracellular side. N-linked (GlcNAc...) asparagine glycosylation is present at Asn5. A helical transmembrane segment spans residues 26 to 46 (ALFITILFVYLVTLGGNLGMI). Over 47-54 (TLIWADPR) the chain is Cytoplasmic. A helical transmembrane segment spans residues 55–75 (LHTPMYFFLSHLSFVDMCSSS). The Extracellular portion of the chain corresponds to 76 to 99 (SIAPKMLCDIFAEEKRISFMGCAA). A disulfide bond links Cys97 and Cys189. The chain crosses the membrane as a helical span at residues 100–120 (QMWFFGFFVGTECFLLASMAY). Over 121 to 133 (DRYTAICKPLLYT) the chain is Cytoplasmic. The helical transmembrane segment at 134 to 154 (LLMSQRVCVHLVVGPYVFAII) threads the bilayer. Over 155–196 (NITTHTTLAFCLPFCGSNTINHFFCDVSPLLSLACADSWVNK) the chain is Extracellular. A helical membrane pass occupies residues 197–217 (VVLFVLSGAIGVFSGLIIIVS). Topologically, residues 218 to 237 (YVSILMTIFKIQTADGKQKA) are cytoplasmic. The helical transmembrane segment at 238 to 258 (FSTCSSHLSAVSILYGTLFFI) threads the bilayer. At 259–271 (YVRPSASFSLNIN) the chain is on the extracellular side. A helical transmembrane segment spans residues 272–292 (KMISLFYTVVIPMLNPLIYSL). Residues 293–312 (RNKEVKGAFRRKVQKKHFPA) lie on the Cytoplasmic side of the membrane.

The protein belongs to the G-protein coupled receptor 1 family.

It localises to the cell membrane. Functionally, potential odorant receptor. This is Olfactory receptor 5G29 from Mus musculus (Mouse).